The following is a 258-amino-acid chain: Indole-3-glycerol phosphate synthase (258 aa).

It belongs to the TrpC family.

It catalyses the reaction 1-(2-carboxyphenylamino)-1-deoxy-D-ribulose 5-phosphate + H(+) = (1S,2R)-1-C-(indol-3-yl)glycerol 3-phosphate + CO2 + H2O. It functions in the pathway amino-acid biosynthesis; L-tryptophan biosynthesis; L-tryptophan from chorismate: step 4/5. This Campylobacter jejuni subsp. jejuni serotype O:23/36 (strain 81-176) protein is Indole-3-glycerol phosphate synthase.